Here is a 249-residue protein sequence, read N- to C-terminus: Probable transcriptional regulatory protein CYB_1350 (249 aa).

The protein belongs to the TACO1 family.

It is found in the cytoplasm. The chain is Probable transcriptional regulatory protein CYB_1350 from Synechococcus sp. (strain JA-2-3B'a(2-13)) (Cyanobacteria bacterium Yellowstone B-Prime).